The sequence spans 713 residues: Bifunctional protein gal10 (713 aa).

The interval 1-350 (MAVQDEYILV…TIENPFGFQI (350 aa)) is galactowaldenase. 7 to 38 (YILVTGGAGYIGSHTVIELINHGYKVIIVDNL) provides a ligand contact to NAD(+). The tract at residues 351-713 (DNYKWKLFNT…SASYNSGEYY (363 aa)) is mutarotase. The active-site For mutarotase activity is the histidine 532.

In the N-terminal section; belongs to the NAD(P)-dependent epimerase/dehydratase family. This sequence in the C-terminal section; belongs to the aldose epimerase family. NAD(+) serves as cofactor.

The catalysed reaction is UDP-alpha-D-glucose = UDP-alpha-D-galactose. It catalyses the reaction alpha-D-glucose = beta-D-glucose. It participates in carbohydrate metabolism; galactose metabolism. The protein operates within carbohydrate metabolism; hexose metabolism. Mutarotase converts alpha-aldose to the beta-anomer. It is active on D-glucose, L-arabinose, D-xylose, D-galactose, maltose and lactose. This is Bifunctional protein gal10 (gal10) from Schizosaccharomyces pombe (strain 972 / ATCC 24843) (Fission yeast).